The chain runs to 102 residues: uncharacterized protein (102 aa).

Residues 77–96 (FFSACVAKSYSSFFISICIL) traverse the membrane as a helical segment.

The protein localises to the membrane. This is an uncharacterized protein from Saccharomyces cerevisiae (strain ATCC 204508 / S288c) (Baker's yeast).